Here is a 1406-residue protein sequence, read N- to C-terminus: DNA-directed RNA polymerase subunit beta' (1406 aa).

Cys70, Cys72, Cys85, and Cys88 together coordinate Zn(2+). Mg(2+)-binding residues include Asp460, Asp462, and Asp464. Zn(2+)-binding residues include Cys814, Cys888, Cys895, and Cys898.

The protein belongs to the RNA polymerase beta' chain family. As to quaternary structure, the RNAP catalytic core consists of 2 alpha, 1 beta, 1 beta' and 1 omega subunit. When a sigma factor is associated with the core the holoenzyme is formed, which can initiate transcription. Requires Mg(2+) as cofactor. Zn(2+) serves as cofactor.

The catalysed reaction is RNA(n) + a ribonucleoside 5'-triphosphate = RNA(n+1) + diphosphate. Its function is as follows. DNA-dependent RNA polymerase catalyzes the transcription of DNA into RNA using the four ribonucleoside triphosphates as substrates. The chain is DNA-directed RNA polymerase subunit beta' from Colwellia psychrerythraea (strain 34H / ATCC BAA-681) (Vibrio psychroerythus).